The sequence spans 147 residues: Large ribosomal subunit protein uL15 (147 aa).

Positions 1–42 (MTIKVHHLRPAPGAKTAKTRVGRGEGSKGKTAGRGTKGSKAR) are disordered.

The protein belongs to the universal ribosomal protein uL15 family. As to quaternary structure, part of the 50S ribosomal subunit.

In terms of biological role, binds to the 23S rRNA. The sequence is that of Large ribosomal subunit protein uL15 from Salinispora arenicola (strain CNS-205).